Consider the following 247-residue polypeptide: Probable transcriptional regulatory protein YebC (247 aa).

Residues 1–20 (MAGHSKWANTRHRKAAQDAK) form a disordered region.

The protein belongs to the TACO1 family.

The protein localises to the cytoplasm. The polypeptide is Probable transcriptional regulatory protein YebC (Salmonella arizonae (strain ATCC BAA-731 / CDC346-86 / RSK2980)).